A 633-amino-acid chain; its full sequence is Kelch-like protein diablo (633 aa).

The disordered stretch occupies residues 1–62 (MGDLPGSTGG…ARLSHTSEKH (62 aa)). A compositionally biased stretch (gly residues) spans 7 to 25 (STGGGGGVGGGGNGGGGPT). The span at 26-45 (IAGTNGNSTTGPGSSTGSTG) shows a compositional bias: low complexity. In terms of domain architecture, BTB spans 80-147 (CDVVLNVGGR…CYTAHIIVEE (68 aa)). One can recognise a BACK domain in the interval 182 to 284 (CLGIRAFADT…SPKFLVGTVG (103 aa)). 6 Kelch repeats span residues 331–377 (VLFA…VLND), 379–425 (LYAV…VLDG), 426–472 (FLYA…VLGG), 474–519 (LYAI…VFNN), 521–566 (IYAV…VVNG), and 567–613 (QLYA…VMRA).

Its pathway is protein modification; protein ubiquitination. In terms of biological role, probable substrate-specific adapter of an E3 ubiquitin-protein ligase complex which mediates the ubiquitination and subsequent proteasomal degradation of target proteins. May have a role in synapse differentiation and growth. In Drosophila ananassae (Fruit fly), this protein is Kelch-like protein diablo.